The following is a 953-amino-acid chain: UvrABC system protein A (953 aa).

Position 33 to 40 (33 to 40) interacts with ATP; the sequence is GLSGSGKS. ABC transporter domains follow at residues 320 to 599 and 619 to 949; these read WGST…EESI and GHDN…RYLK. 652–659 serves as a coordination point for ATP; that stretch reads GVSGSGKS. The C4-type zinc-finger motif lies at 752–778; the sequence is CEACQGDGLIKIEMHFLPDVYVKCDIC.

This sequence belongs to the ABC transporter superfamily. UvrA family. In terms of assembly, forms a heterotetramer with UvrB during the search for lesions.

It is found in the cytoplasm. Functionally, the UvrABC repair system catalyzes the recognition and processing of DNA lesions. UvrA is an ATPase and a DNA-binding protein. A damage recognition complex composed of 2 UvrA and 2 UvrB subunits scans DNA for abnormalities. When the presence of a lesion has been verified by UvrB, the UvrA molecules dissociate. The protein is UvrABC system protein A of Rickettsia bellii (strain RML369-C).